A 361-amino-acid polypeptide reads, in one-letter code: Geranylgeranyl pyrophosphate synthase 3 (361 aa).

Residues 44 to 63 (DSNGSKELAPNGAQSRVQKP) are disordered. Isopentenyl diphosphate-binding residues include lysine 81, arginine 84, and histidine 113. Residues aspartate 120 and aspartate 124 each contribute to the Mg(2+) site. Arginine 129 is a dimethylallyl diphosphate binding site. Arginine 130 serves as a coordination point for isopentenyl diphosphate. Positions 207, 208, and 244 each coordinate dimethylallyl diphosphate. Residue aspartate 247 coordinates Mg(2+). Dimethylallyl diphosphate is bound by residues asparagine 251, lysine 261, and lysine 271.

It belongs to the FPP/GGPP synthase family. It depends on Mg(2+) as a cofactor.

It carries out the reaction isopentenyl diphosphate + dimethylallyl diphosphate = (2E)-geranyl diphosphate + diphosphate. The catalysed reaction is isopentenyl diphosphate + (2E)-geranyl diphosphate = (2E,6E)-farnesyl diphosphate + diphosphate. It catalyses the reaction isopentenyl diphosphate + (2E,6E)-farnesyl diphosphate = (2E,6E,10E)-geranylgeranyl diphosphate + diphosphate. Geranylgeranyl pyrophosphate synthase; part of the gene cluster 25 that mediates the biosynthesis of an isoprenoid secondary metabolite. This is Geranylgeranyl pyrophosphate synthase 3 (GGS3) from Zymoseptoria tritici (strain CBS 115943 / IPO323) (Speckled leaf blotch fungus).